The following is a 660-amino-acid chain: MKAKQADAVLVLENIVRKFPAGETFVTVLKDINLTIKRGEMVAIVGASGSGKSTLMNILGCLDRPTFGRYWISGKETASLSADELSALRRNHFGFIFQRYHLLNELTALGNVEIPAVYAGYAPEVRRKRAEDLLTRLGMRDRIHHRPNQLSGGQQQRVSIARALMNNAEVILADEPTGALDKKSGQEVLRILDELHQEGRTIIMVTHDMQVAERADRIIEISDGEIIADNVSKVAKTKTDSQALYGKQVLKDQKTLGFFRSFAERFREAFVMALLAMNAHRMRTFLTMLGVIIGIGAIIAMVALGNGTREKILENFKSLGSNTLTILPGKSLSDPQAEKITSLVEADAEALSKLPYVSGVTPQMSASSTIRFGSVEADVVIAGVGEQYFQTQGLNAVQGRLFDQKSVHDRAIDLVIEKEALAVLFPHSHESPLGKVVHVGNVPVRIVGVIDPQHNGGTSSTLQVYLPYTTVQTRFLGTTQVRAITVKIADTVDSNLAETMVRRFLIMRHGEEDFFIRNSQLFRDRIMESTHILTLLVSSIAAISLIVGGIGVMNIMLVTVSERINEIGVRMAVGARQSDILQQFLIEAILVCVIGGGLGILFGMSIGGLFLLFKAPIHLIYTIDSIILSLTFSTLIGVCFGFSPARQASRLDPVVALSRD.

Residues 10-248 (LVLENIVRKF…TDSQALYGKQ (239 aa)) enclose the ABC transporter domain. 46 to 53 (GASGSGKS) contributes to the ATP binding site. 4 consecutive transmembrane segments (helical) span residues 285 to 305 (FLTM…VALG), 532 to 552 (ILTL…GIGV), 593 to 613 (VIGG…FLLF), and 625 to 645 (SIIL…FSPA).

This sequence belongs to the ABC transporter superfamily. Macrolide exporter (TC 3.A.1.122) family. As to quaternary structure, homodimer.

The protein resides in the cell inner membrane. In terms of biological role, non-canonical ABC transporter that contains transmembrane domains (TMD), which form a pore in the inner membrane, and an ATP-binding domain (NBD), which is responsible for energy generation. Confers resistance against macrolides. In Bartonella henselae (strain ATCC 49882 / DSM 28221 / CCUG 30454 / Houston 1) (Rochalimaea henselae), this protein is Macrolide export ATP-binding/permease protein MacB.